A 395-amino-acid polypeptide reads, in one-letter code: ATP synthase subunit beta, chloroplastic (395 aa).

72 to 79 (GGAGVGKT) is a binding site for ATP.

The protein belongs to the ATPase alpha/beta chains family. F-type ATPases have 2 components, CF(1) - the catalytic core - and CF(0) - the membrane proton channel. CF(1) has five subunits: alpha(3), beta(3), gamma(1), delta(1), epsilon(1). CF(0) has four main subunits: a(1), b(1), b'(1) and c(9-12).

It localises to the plastid. It is found in the chloroplast thylakoid membrane. The enzyme catalyses ATP + H2O + 4 H(+)(in) = ADP + phosphate + 5 H(+)(out). Produces ATP from ADP in the presence of a proton gradient across the membrane. The catalytic sites are hosted primarily by the beta subunits. The chain is ATP synthase subunit beta, chloroplastic from Blechnum occidentale (Hammock fern).